The primary structure comprises 230 residues: NADH dehydrogenase [ubiquinone] iron-sulfur protein 8, mitochondrial (230 aa).

A mitochondrion-targeting transit peptide spans 1 to 42; sequence MAAILARKSLSALRSRQLVLAGQAWQQGANTSNGTLLGTRTF. 2 consecutive 4Fe-4S ferredoxin-type domains span residues 122-151 and 161-190; these read RRYPTGEERCIACKLCEAICPAQAITIEAE and TRYDIDMTKCIYCGFCQEACPVDAIVEGPN. Positions 131, 134, 137, 141, 170, 173, 176, and 180 each coordinate [4Fe-4S] cluster.

This sequence belongs to the complex I 23 kDa subunit family. As to quaternary structure, complex I is composed of about 45 different subunits. This is a component of the iron-sulfur (IP) fragment of the enzyme. Requires [4Fe-4S] cluster as cofactor.

The protein resides in the mitochondrion. The enzyme catalyses a ubiquinone + NADH + 5 H(+)(in) = a ubiquinol + NAD(+) + 4 H(+)(out). Core subunit of the mitochondrial membrane respiratory chain NADH dehydrogenase (Complex I) that is believed to belong to the minimal assembly required for catalysis. Complex I functions in the transfer of electrons from NADH to the respiratory chain. The immediate electron acceptor for the enzyme is believed to be ubiquinone. May donate electrons to ubiquinone. The protein is NADH dehydrogenase [ubiquinone] iron-sulfur protein 8, mitochondrial of Nicotiana tabacum (Common tobacco).